The chain runs to 387 residues: Killer cell lectin-like receptor subfamily G member 2 (387 aa).

The disordered stretch occupies residues 1-105; that stretch reads MEPPQVPAEA…SGEPAPASWA (105 aa). Residues 15-27 are compositionally biased toward basic and acidic residues; sequence ASEDSPRPERTGW. Residue Ser-143 is modified to Phosphoserine. The interval 155-174 is disordered; the sequence is QWLPRAPSPGSTWSRGSPLA. Residues 241 to 261 form a helical membrane-spanning segment; it reads WALVVMAVLLAVCTVAVVALA. One can recognise a C-type lectin domain in the interval 278–383; sequence SQEQCYYLSE…CSSPRPWVCA (106 aa). Intrachain disulfides connect Cys-299–Cys-382 and Cys-361–Cys-374.

Its subcellular location is the membrane. The chain is Killer cell lectin-like receptor subfamily G member 2 (Klrg2) from Mus musculus (Mouse).